The chain runs to 179 residues: Putative mediator of RNA polymerase II transcription subunit 28 (179 aa).

Residues Ser81–Tyr119 are a coiled coil.

This sequence belongs to the Mediator complex subunit 28 family. As to quaternary structure, component of the Mediator complex.

It localises to the nucleus. In terms of biological role, component of the Mediator complex, a coactivator involved in the regulated transcription of nearly all RNA polymerase II-dependent genes. Mediator functions as a bridge to convey information from gene-specific regulatory proteins to the basal RNA polymerase II transcription machinery. Mediator is recruited to promoters by direct interactions with regulatory proteins and serves as a scaffold for the assembly of a functional preinitiation complex with RNA polymerase II and the general transcription factors. The protein is Putative mediator of RNA polymerase II transcription subunit 28 (med28) of Dictyostelium discoideum (Social amoeba).